Reading from the N-terminus, the 129-residue chain is Small ribosomal subunit protein uS11 (129 aa).

This sequence belongs to the universal ribosomal protein uS11 family. As to quaternary structure, part of the 30S ribosomal subunit. Interacts with proteins S7 and S18. Binds to IF-3.

In terms of biological role, located on the platform of the 30S subunit, it bridges several disparate RNA helices of the 16S rRNA. Forms part of the Shine-Dalgarno cleft in the 70S ribosome. This is Small ribosomal subunit protein uS11 from Lactobacillus gasseri (strain ATCC 33323 / DSM 20243 / BCRC 14619 / CIP 102991 / JCM 1131 / KCTC 3163 / NCIMB 11718 / NCTC 13722 / AM63).